A 188-amino-acid polypeptide reads, in one-letter code: uncharacterized protein (188 aa).

The protein resides in the plastid. It localises to the cyanelle. This is an uncharacterized protein from Cyanophora paradoxa.